Here is a 190-residue protein sequence, read N- to C-terminus: LIM domain-containing protein WLIM1 (190 aa).

Position 2 is an N-acetylalanine (alanine 2). One can recognise an LIM zinc-binding 1 domain in the interval 8 to 68; the sequence is QKCMACDKTV…RPHFDQNFKR (61 aa). Positions 74 to 98 are disordered; it reads KSFEGTPKIGKPDRPLEGERPAGTK. The segment covering 83–95 has biased composition (basic and acidic residues); sequence GKPDRPLEGERPA. In terms of domain architecture, LIM zinc-binding 2 spans 108-168; the sequence is EKCVGCDKTV…KHHHIQLIKE (61 aa).

Interacts with F-actin. In terms of tissue distribution, expressed in roots, leaves, stems, flowers and siliques. Not detected in pollen.

The protein resides in the cytoplasm. It localises to the cytoskeleton. Binds to actin filaments and promotes cross-linking into thick bundles. Has an actin-stabilizing activity. The actin regulatory activities are not regulated by pH and [Ca(2+)]. The sequence is that of LIM domain-containing protein WLIM1 from Arabidopsis thaliana (Mouse-ear cress).